The sequence spans 358 residues: Presenilin hop-1 (358 aa).

Residues 1-12 are Cytoplasmic-facing; sequence MPRTKRVYSGKT. The helical transmembrane segment at 13–33 threads the bilayer; it reads ITGVLYPVAICMLFVAINVKL. Over 34 to 57 the chain is Lumenal; the sequence is SQPEQQEQSKVVYGLFHSYDTADS. The helical transmembrane segment at 58-78 threads the bilayer; sequence GTITLYLIGFLILTTSLGVFC. The Cytoplasmic segment spans residues 79–86; that stretch reads YQMKFYKA. Residues 87–107 form a helical membrane-spanning segment; sequence IKVYVLANSIGILLVYSVFHF. At 108-115 the chain is on the lumenal side; that stretch reads QRIAEAQS. A helical transmembrane segment spans residues 116-136; sequence IPVSVPTFFFLILQFGGLGIT. Residues 137–148 lie on the Cytoplasmic side of the membrane; it reads CLHWKSHRRLHQ. Residues 149–169 traverse the membrane as a helical segment; it reads FYLIMLAGLTAIFILNILPDW. Position 170 (threonine 170) is a topological domain, lumenal. A helical membrane pass occupies residues 171 to 191; sequence VWMALTAISFWDIVAVLTPCG. Aspartate 182 is a catalytic residue. Topologically, residues 192-273 are cytoplasmic; sequence PLKMLVETAN…EVREVEGTIR (82 aa). The span at 221-240 shows a compositional bias: polar residues; that stretch reads EVDSPDTTRSNSTPLTEFNN. Positions 221 to 242 are disordered; that stretch reads EVDSPDTTRSNSTPLTEFNNSS. A helical transmembrane segment spans residues 274–294; the sequence is LGMGDFVFYSLMLGNTVQTCP. Aspartate 278 is a catalytic residue. Residues 295-297 lie on the Lumenal side of the membrane; that stretch reads LPT. Residues 298–318 traverse the membrane as a helical segment; it reads VVACFVSNLVGLTITLPIVTL. Topologically, residues 319–321 are cytoplasmic; the sequence is SQT. Residues 322–342 constitute an intramembrane region (helical); that stretch reads ALPALPFPLAIAAIFYFSSHI. The PAL motif lies at 324-326; it reads PAL. The Cytoplasmic portion of the chain corresponds to 343–358; sequence ALTPFTDLCTSQLILI.

It belongs to the peptidase A22A family. In terms of assembly, homodimer. Component of the gamma-secretase complex, a complex probably composed of the presenilin homodimer (sel-12, hop-1 or spe-4), nicastrin (aph-2), aph-1 and pen-2. In terms of tissue distribution, weakly expressed.

The protein localises to the endoplasmic reticulum membrane. It is found in the golgi apparatus membrane. Functionally, probable catalytic subunit of the gamma-secretase complex, an endoprotease complex that catalyzes the intramembrane cleavage of integral membrane proteins such as Notch receptors (lin-12 or glp-1). Probably works redundantly of lin-12, which provides more presenilin function. This is Presenilin hop-1 (hop-1) from Caenorhabditis elegans.